The sequence spans 526 residues: Sugar transport protein 13 (526 aa).

Residues 1–18 (MTGGGFATSANGVEFEAK) are Cytoplasmic-facing. Residues 19–39 (ITPIVIISCIMAATGGLMFGY) traverse the membrane as a helical segment. Residues 40–81 (DVGVSGGVTSMPDFLEKFFPVVYRKVVAGADKDSNYCKYDNQ) are Extracellular-facing. Residues 82–102 (GLQLFTSSLYLAGLTATFFAS) form a helical membrane-spanning segment. Over 103-111 (YTTRTLGRR) the chain is Cytoplasmic. A helical membrane pass occupies residues 112–132 (LTMLIAGVFFIIGVALNAGAQ). Topologically, residues 133–141 (DLAMLIAGR) are extracellular. The chain crosses the membrane as a helical span at residues 142–162 (ILLGCGVGFANQAVPLFLSEI). The Cytoplasmic portion of the chain corresponds to 163–168 (APTRIR). A helical transmembrane segment spans residues 169-189 (GGLNILFQLNVTIGILFANLV). At 190-203 (NYGTAKIKGGWGWR) the chain is on the extracellular side. A helical transmembrane segment spans residues 204–224 (LSLGLAGIPALLLTVGALLVT). The Cytoplasmic portion of the chain corresponds to 225–296 (ETPNSLVERG…IAVALQIFQQ (72 aa)). A helical membrane pass occupies residues 297-317 (CTGINAIMFYAPVLFSTLGFG). Over 318–319 (SD) the chain is Extracellular. Residues 320–340 (ASLYSAVVTGAVNVLSTLVSI) traverse the membrane as a helical segment. Residues 341–349 (YSVDKVGRR) are Cytoplasmic-facing. The chain crosses the membrane as a helical span at residues 350–370 (VLLLEAGVQMFFSQVVIAIIL). Residues 371 to 383 (GVKVTDTSTNLSK) are Extracellular-facing. The chain crosses the membrane as a helical span at residues 384–404 (GFAILVVVMICTYVAAFAWSW). The Cytoplasmic portion of the chain corresponds to 405–426 (GPLGWLIPSETFPLETRSAGQS). The chain crosses the membrane as a helical span at residues 427–447 (VTVCVNLLFTFIIAQAFLSML). The Extracellular portion of the chain corresponds to 448–451 (CHFK). Residues 452–472 (FGIFIFFSAWVLIMSVFVMFL) form a helical membrane-spanning segment. Residues 473–526 (LPETKNIPIEEMTERVWKKHWFWARFMDDHNDHEFVNGEKSNGKSNGFDPSTRL) are Cytoplasmic-facing.

It belongs to the major facilitator superfamily. Sugar transporter (TC 2.A.1.1) family.

Its subcellular location is the cell membrane. Mediates an active uptake of hexoses, probably by sugar/hydrogen symport. This chain is Sugar transport protein 13 (STP13), found in Arabidopsis thaliana (Mouse-ear cress).